A 376-amino-acid polypeptide reads, in one-letter code: Probable dual-specificity RNA methyltransferase RlmN (376 aa).

Catalysis depends on glutamate 96, which acts as the Proton acceptor. The region spanning tyrosine 102–glutamate 346 is the Radical SAM core domain. Cysteine 109 and cysteine 351 are oxidised to a cystine. [4Fe-4S] cluster is bound by residues cysteine 116, cysteine 120, and cysteine 123. S-adenosyl-L-methionine contacts are provided by residues glycine 171–glutamate 172, serine 203, serine 226–histidine 228, and asparagine 308. The S-methylcysteine intermediate role is filled by cysteine 351.

Belongs to the radical SAM superfamily. RlmN family. The cofactor is [4Fe-4S] cluster.

Its subcellular location is the cytoplasm. It catalyses the reaction adenosine(2503) in 23S rRNA + 2 reduced [2Fe-2S]-[ferredoxin] + 2 S-adenosyl-L-methionine = 2-methyladenosine(2503) in 23S rRNA + 5'-deoxyadenosine + L-methionine + 2 oxidized [2Fe-2S]-[ferredoxin] + S-adenosyl-L-homocysteine. It carries out the reaction adenosine(37) in tRNA + 2 reduced [2Fe-2S]-[ferredoxin] + 2 S-adenosyl-L-methionine = 2-methyladenosine(37) in tRNA + 5'-deoxyadenosine + L-methionine + 2 oxidized [2Fe-2S]-[ferredoxin] + S-adenosyl-L-homocysteine. Specifically methylates position 2 of adenine 2503 in 23S rRNA and position 2 of adenine 37 in tRNAs. This is Probable dual-specificity RNA methyltransferase RlmN from Chloroflexus aurantiacus (strain ATCC 29366 / DSM 635 / J-10-fl).